A 290-amino-acid chain; its full sequence is 33 kDa chaperonin (290 aa).

Cystine bridges form between cysteine 235/cysteine 237 and cysteine 268/cysteine 271.

It belongs to the HSP33 family. In terms of processing, under oxidizing conditions two disulfide bonds are formed involving the reactive cysteines. Under reducing conditions zinc is bound to the reactive cysteines and the protein is inactive.

It is found in the cytoplasm. In terms of biological role, redox regulated molecular chaperone. Protects both thermally unfolding and oxidatively damaged proteins from irreversible aggregation. Plays an important role in the bacterial defense system toward oxidative stress. This chain is 33 kDa chaperonin, found in Streptococcus equi subsp. equi (strain 4047).